A 309-amino-acid polypeptide reads, in one-letter code: Uridylate-specific endoribonuclease C (309 aa).

Positions 1–22 (MASGYDFGWIPVLLSLFTLTDA) are cleaved as a signal peptide. Residues 27–303 (VNQELSNIFN…IGTAYPKLLS (277 aa)) form the EndoU domain. N-linked (GlcNAc...) asparagine glycans are attached at residues Asn-53 and Asn-121. Residues His-181, His-197, and Lys-242 contribute to the active site.

This sequence belongs to the ENDOU family. In terms of assembly, monomer. It depends on Mn(2+) as a cofactor.

The protein resides in the secreted. The catalysed reaction is ribonucleotidyl-uridine-RNA = a 5'-end dephospho-uridine-RNA + a 3'-end 2',3'-cyclophospho-ribonucleotide-RNA. Endoribonuclease that cleaves single-stranded RNAs at 5' of uridylates and releases a product with a 2',3'-cyclic phosphate at the 3'-end. The UU and GU sites are more efficiently cleaved than CU and AU sites. The polypeptide is Uridylate-specific endoribonuclease C (endouc) (Danio rerio (Zebrafish)).